The sequence spans 325 residues: UDP-N-acetylenolpyruvoylglucosamine reductase (325 aa).

Residues 40-221 (RTGGLAELFY…RAAMDEVALH (182 aa)) enclose the FAD-binding PCMH-type domain. The active site involves Arg-186. Residue Ser-235 is the Proton donor of the active site. Residue Glu-305 is part of the active site.

This sequence belongs to the MurB family. FAD is required as a cofactor.

It is found in the cytoplasm. The enzyme catalyses UDP-N-acetyl-alpha-D-muramate + NADP(+) = UDP-N-acetyl-3-O-(1-carboxyvinyl)-alpha-D-glucosamine + NADPH + H(+). Its pathway is cell wall biogenesis; peptidoglycan biosynthesis. Its function is as follows. Cell wall formation. This is UDP-N-acetylenolpyruvoylglucosamine reductase from Bartonella henselae (strain ATCC 49882 / DSM 28221 / CCUG 30454 / Houston 1) (Rochalimaea henselae).